The chain runs to 292 residues: MFHGSMVALVTPMHPDGALDWEGLRRLVDFHIENGTDAIVTVGTTGESPTLEVKEHIRVIREVVDQAQGRLPVIAGTGANSTREAEELTRAALEAGADACLLVVPYYNRPTQEGLYLHFKAIAEAVPIPQILYNVPTRTACDLLPETVARLADISNIVGIKEATEDIARGRQILELCGDKLDLYSGEDSAAMEYMLIGGRGTISVTANVAPKAVHEMCTVALQGNRKAAEAINTRLCPLYAALFSEVNPIPVKWALYEMGLIAQGIRLPLTVLSERYHELLRQALRQEQILQ.

Thr-45 contacts pyruvate. Tyr-133 (proton donor/acceptor) is an active-site residue. The active-site Schiff-base intermediate with substrate is the Lys-161. Ile-203 provides a ligand contact to pyruvate.

This sequence belongs to the DapA family. As to quaternary structure, homotetramer; dimer of dimers.

It is found in the cytoplasm. The catalysed reaction is L-aspartate 4-semialdehyde + pyruvate = (2S,4S)-4-hydroxy-2,3,4,5-tetrahydrodipicolinate + H2O + H(+). It functions in the pathway amino-acid biosynthesis; L-lysine biosynthesis via DAP pathway; (S)-tetrahydrodipicolinate from L-aspartate: step 3/4. Catalyzes the condensation of (S)-aspartate-beta-semialdehyde [(S)-ASA] and pyruvate to 4-hydroxy-tetrahydrodipicolinate (HTPA). The polypeptide is 4-hydroxy-tetrahydrodipicolinate synthase (Nitrosococcus oceani (strain ATCC 19707 / BCRC 17464 / JCM 30415 / NCIMB 11848 / C-107)).